The primary structure comprises 252 residues: Indole-3-glycerol phosphate synthase (252 aa).

It belongs to the TrpC family.

It carries out the reaction 1-(2-carboxyphenylamino)-1-deoxy-D-ribulose 5-phosphate + H(+) = (1S,2R)-1-C-(indol-3-yl)glycerol 3-phosphate + CO2 + H2O. It functions in the pathway amino-acid biosynthesis; L-tryptophan biosynthesis; L-tryptophan from chorismate: step 4/5. This chain is Indole-3-glycerol phosphate synthase, found in Listeria monocytogenes serotype 4b (strain CLIP80459).